We begin with the raw amino-acid sequence, 233 residues long: UPF0280 protein AF_0649 (233 aa).

Belongs to the UPF0280 family.

The sequence is that of UPF0280 protein AF_0649 from Archaeoglobus fulgidus (strain ATCC 49558 / DSM 4304 / JCM 9628 / NBRC 100126 / VC-16).